A 94-amino-acid polypeptide reads, in one-letter code: DNA-binding protein HU (94 aa).

The protein belongs to the bacterial histone-like protein family.

Functionally, histone-like DNA-binding protein which is capable of wrapping DNA to stabilize it, and thus to prevent its denaturation under extreme environmental conditions. The protein is DNA-binding protein HU (hup) of Xylella fastidiosa (strain 9a5c).